Consider the following 348-residue polypeptide: sn-glycerol-3-phosphate import ATP-binding protein UgpC (348 aa).

The ABC transporter domain occupies 4-235 (IQLSNIKKQY…PETTFVADFI (232 aa)). Residue 37–44 (GPSGCGKS) participates in ATP binding.

The protein belongs to the ABC transporter superfamily. sn-glycerol-3-phosphate importer (TC 3.A.1.1.3) family. As to quaternary structure, the complex is composed of two ATP-binding proteins (UgpC), two transmembrane proteins (UgpA and UgpE) and a solute-binding protein (UgpB).

The protein localises to the cell inner membrane. It carries out the reaction sn-glycerol 3-phosphate(out) + ATP + H2O = sn-glycerol 3-phosphate(in) + ADP + phosphate + H(+). Its function is as follows. Part of the ABC transporter complex UgpBAEC involved in sn-glycerol-3-phosphate (G3P) import. Responsible for energy coupling to the transport system. The chain is sn-glycerol-3-phosphate import ATP-binding protein UgpC from Bartonella quintana (strain Toulouse) (Rochalimaea quintana).